Reading from the N-terminus, the 777-residue chain is Histone-lysine N-methyltransferase set9 (777 aa).

Residues 117–231 (CPFEVNATNR…VGEEITVTYS (115 aa)) form the SET domain. Disordered stretches follow at residues 263-414 (AVQK…ILSP) and 682-718 (RMGSKGKQGSSAPSTKGTPAGEKNEQSAKQEQSQGQY). Residues 291–301 (TALQASRTPSV) show a composition bias toward polar residues. Positions 323-337 (TSTTDSAAQGAGADG) are enriched in low complexity. Polar residues-rich tracts occupy residues 371–405 (TAPSRGSSDNETSKSPLSFSTTNDNVTDATSQGSE) and 688–698 (KQGSSAPSTKG).

This sequence belongs to the class V-like SAM-binding methyltransferase superfamily. Histone-lysine methyltransferase family. Suvar4-20 subfamily.

The protein resides in the nucleus. Its subcellular location is the chromosome. The catalysed reaction is L-lysyl(20)-[histone H4] + 3 S-adenosyl-L-methionine = N(6),N(6),N(6)-trimethyl-L-lysyl(20)-[histone H4] + 3 S-adenosyl-L-homocysteine + 3 H(+). Functionally, histone methyltransferase that trimethylates 'Lys-20' of histone H4 to form H4K20me3. In Neurospora crassa (strain ATCC 24698 / 74-OR23-1A / CBS 708.71 / DSM 1257 / FGSC 987), this protein is Histone-lysine N-methyltransferase set9 (hlm-1).